The following is a 2209-amino-acid chain: Genome polyprotein (2209 aa).

Gly-2 carries the N-myristoyl glycine; by host lipid modification. The Cytoplasmic segment spans residues 2 to 1520 (GAQVSSQKVG…NINRAMTILQ (1519 aa)). Positions 580–600 (GLGQMLESMIDNTVRETVGAA) are amphipathic alpha-helix. Active-site for protease 2A activity residues include His-901 and Asp-919. Zn(2+)-binding residues include Cys-936 and Cys-938. Cys-990 functions as the For protease 2A activity in the catalytic mechanism. Zn(2+) is bound by residues Cys-996 and His-998. Residues 1128–1200 (GDSWLKKFTE…HQSCPSQEHQ (73 aa)) are membrane-binding. Residues 1128–1266 (GDSWLKKFTE…SPGTGKSVAT (139 aa)) form an oligomerization region. An RNA-binding region spans residues 1149 to 1153 (SNKIS). One can recognise an SF3 helicase domain in the interval 1232–1388 (EHTINNYIQF…NEYSRDGKLN (157 aa)). An ATP-binding site is contributed by 1256-1263 (GSPGTGKS). Zn(2+) is bound by residues Cys-1396, Cys-1399, Cys-1408, and Cys-1413. A C4-type zinc finger spans residues 1396-1413 (CKNCHQPANFKRCCPLVC). The RNA-binding stretch occupies residues 1440 to 1447 (ERNRRSNI). The oligomerization stretch occupies residues 1451–1456 (MEALFQ). Residues 1521-1536 (AVTTFAAVAGVVYVMY) lie within the membrane without spanning it. Over 1537 to 2209 (KLFAGHQGAY…TLYRRWLDSF (673 aa)) the chain is Cytoplasmic. Tyr-1546 carries the post-translational modification O-(5'-phospho-RNA)-tyrosine. The 179-residue stretch at 1566 to 1744 (GPGFDYAVAM…FAAALKRSYF (179 aa)) folds into the Peptidase C3 domain. Catalysis depends on for protease 3C activity residues His-1605, Glu-1636, and Cys-1712. The region spanning 1975 to 2090 (EKLFAFDYTG…SYPHEVDASL (116 aa)) is the RdRp catalytic domain. 2 residues coordinate Mg(2+): Asp-1981 and Asp-2076.

The protein belongs to the picornaviruses polyprotein family. Interacts with capsid protein VP1 and capsid protein VP3 to form heterotrimeric protomers. As to quaternary structure, interacts with capsid protein VP0, and capsid protein VP3 to form heterotrimeric protomers. Interacts with human PVR. Five protomers subsequently associate to form pentamers which serve as building blocks for the capsid. Interacts with capsid protein VP2, capsid protein VP3 and capsid protein VP4 following cleavage of capsid protein VP0. In terms of assembly, interacts with capsid protein VP1 and capsid protein VP3 in the mature capsid. Interacts with capsid protein VP0 and capsid protein VP1 to form heterotrimeric protomers. Five protomers subsequently associate to form pentamers which serve as building blocks for the capsid. Interacts with capsid protein VP4 in the mature capsid. Interacts with protein 2C; this interaction may be important for virion morphogenesis. As to quaternary structure, interacts with capsid protein VP1 and capsid protein VP3. In terms of assembly, homodimer. Homohexamer; forms a hexameric ring structure with 6-fold symmetry characteristic of AAA+ ATPases. Interacts (via N-terminus) with host RTN3 (via reticulon domain); this interaction is important for viral replication. Interacts with capsid protein VP3; this interaction may be important for virion morphogenesis. As to quaternary structure, interacts with protein 3CD. In terms of assembly, homodimer. Interacts with host GBF1. Interacts (via GOLD domain) with host ACBD3 (via GOLD domain); this interaction allows the formation of a viral protein 3A/ACBD3 heterotetramer with a 2:2 stoichiometry, which will stimulate the recruitment of host PI4KB in order to synthesize PI4P at the viral RNA replication sites. Interacts with RNA-directed RNA polymerase. As to quaternary structure, interacts with protein 3AB and with RNA-directed RNA polymerase. In terms of assembly, interacts with Viral protein genome-linked and with protein 3CD. Mg(2+) is required as a cofactor. Specific enzymatic cleavages in vivo by the viral proteases yield processing intermediates and the mature proteins. In terms of processing, myristoylation is required for the formation of pentamers during virus assembly. Further assembly of 12 pentamers and a molecule of genomic RNA generates the provirion. Post-translationally, during virion maturation, immature virions are rendered infectious following cleavage of VP0 into VP4 and VP2. This maturation seems to be an autocatalytic event triggered by the presence of RNA in the capsid and it is followed by a conformational change infectious virion. Myristoylation is required during RNA encapsidation and formation of the mature virus particle. In terms of processing, VPg is uridylylated by the polymerase into VPg-pUpU. This acts as a nucleotide-peptide primer for the genomic RNA replication.

It localises to the virion. It is found in the host cytoplasm. The protein resides in the host cytoplasmic vesicle membrane. Its subcellular location is the host nucleus. The enzyme catalyses a ribonucleoside 5'-triphosphate + H2O = a ribonucleoside 5'-diphosphate + phosphate + H(+). It catalyses the reaction Selective cleavage of Tyr-|-Gly bond in the picornavirus polyprotein.. It carries out the reaction RNA(n) + a ribonucleoside 5'-triphosphate = RNA(n+1) + diphosphate. The catalysed reaction is Selective cleavage of Gln-|-Gly bond in the poliovirus polyprotein. In other picornavirus reactions Glu may be substituted for Gln, and Ser or Thr for Gly.. Its activity is regulated as follows. Replication or transcription is subject to high level of random mutations by the nucleotide analog ribavirin. In terms of biological role, forms an icosahedral capsid of pseudo T=3 symmetry with capsid proteins VP2 and VP3. The capsid is 300 Angstroms in diameter, composed of 60 copies of each capsid protein and enclosing the viral positive strand RNA genome. Capsid protein VP1 mainly forms the vertices of the capsid. Capsid protein VP1 interacts with host cell receptor PVR to provide virion attachment to target host cells. This attachment induces virion internalization predominantly through clathrin- and caveolin-independent endocytosis in Hela cells and through caveolin-mediated endocytosis in brain microvascular endothelial cells. Tyrosine kinases are probably involved in the entry process. Virus binding to PVR induces increased junctional permeability and rearrangement of junctional proteins. Modulation of endothelial tight junctions, as well as cytolytic infection of endothelial cells themselves, may result in loss of endothelial integrity which may help the virus to reach the CNS. After binding to its receptor, the capsid undergoes conformational changes. Capsid protein VP1 N-terminus (that contains an amphipathic alpha-helix) and capsid protein VP4 are externalized. Together, they shape a pore in the host membrane through which viral genome is translocated to host cell cytoplasm. Forms an icosahedral capsid of pseudo T=3 symmetry with capsid proteins VP2 and VP3. The capsid is 300 Angstroms in diameter, composed of 60 copies of each capsid protein and enclosing the viral positive strand RNA genome. Its function is as follows. Lies on the inner surface of the capsid shell. After binding to the host receptor, the capsid undergoes conformational changes. Capsid protein VP4 is released, Capsid protein VP1 N-terminus is externalized, and together, they shape a pore in the host membrane through which the viral genome is translocated into the host cell cytoplasm. Functionally, component of immature procapsids, which is cleaved into capsid proteins VP4 and VP2 after maturation. Allows the capsid to remain inactive before the maturation step. In terms of biological role, cysteine protease that cleaves viral polyprotein and specific host proteins. It is responsible for the autocatalytic cleavage between the P1 and P2 regions, which is the first cleavage occurring in the polyprotein. Also cleaves the host translation initiation factor EIF4G1, in order to shut down the capped cellular mRNA translation. Inhibits the host nucleus-cytoplasm protein and RNA trafficking by cleaving host members of the nuclear pores including NUP98, NUP62 and NUP153. Counteracts stress granule formation probably by antagonizing its assembly or promoting its dissassembly. Cleaves and inhibits host IFIH1/MDA5, thereby inhibiting the type-I IFN production and the establishment of the antiviral state. Cleaves and inhibits host MAVS, thereby inhibiting the type-I IFN production and the establishment of the antiviral state. Plays an essential role in the virus replication cycle by acting as a viroporin. Creates a pore in the host endoplasmic reticulum and as a consequence releases Ca2+ in the cytoplasm of infected cell. In turn, high levels of cytoplasmic calcium may trigger membrane trafficking and transport of viral ER-associated proteins to viroplasms, sites of viral genome replication. Its function is as follows. Induces and associates with structural rearrangements of intracellular membranes. Displays RNA-binding, nucleotide binding and NTPase activities. May play a role in virion morphogenesis and viral RNA encapsidation by interacting with the capsid protein VP3. Functionally, localizes the viral replication complex to the surface of membranous vesicles. Together with protein 3CD binds the Cis-Active RNA Element (CRE) which is involved in RNA synthesis initiation. Acts as a cofactor to stimulate the activity of 3D polymerase, maybe through a nucleid acid chaperone activity. In terms of biological role, localizes the viral replication complex to the surface of membranous vesicles. It inhibits host cell endoplasmic reticulum-to-Golgi apparatus transport and causes the disassembly of the Golgi complex, possibly through GBF1 interaction. This would result in depletion of MHC, trail receptors and IFN receptors at the host cell surface. Plays an essential role in viral RNA replication by recruiting ACBD3 and PI4KB at the viral replication sites, thereby allowing the formation of the rearranged membranous structures where viral replication takes place. Acts as a primer for viral RNA replication and remains covalently bound to viral genomic RNA. VPg is uridylylated prior to priming replication into VPg-pUpU. The oriI viral genomic sequence may act as a template for this. The VPg-pUpU is then used as primer on the genomic RNA poly(A) by the RNA-dependent RNA polymerase to replicate the viral genome. During genome replication, the VPg-RNA linkage is removed by the host TDP2, thereby accelerating replication. During the late stage of the replication cycle, host TDP2 is excluded from sites of viral RNA synthesis and encapsidation, allowing for the generation of progeny virions. Its function is as follows. Involved in the viral replication complex and viral polypeptide maturation. It exhibits protease activity with a specificity and catalytic efficiency that is different from protease 3C. Protein 3CD lacks polymerase activity. Protein 3CD binds to the 5'UTR of the viral genome. Functionally, major viral protease that mediates proteolytic processing of the polyprotein. Cleaves host EIF5B, contributing to host translation shutoff. Also cleaves host PABPC1, contributing to host translation shutoff. Cleaves host RIGI and thus contributes to the inhibition of type I interferon production. Cleaves host NLRP1, triggers host N-glycine-mediated degradation of the autoinhibitory NLRP1 N-terminal fragment. Inhibits the integrated stress response (ISR) in the infected cell by cleaving host G3BP1. Stress granule formation is thus inhibited, which allows protein synthesis and viral replication. In terms of biological role, replicates the viral genomic RNA on the surface of intracellular membranes. May form linear arrays of subunits that propagate along a strong head-to-tail interaction called interface-I. Covalently attaches UMP to a tyrosine of VPg, which is used to prime RNA synthesis. The positive stranded RNA genome is first replicated at virus induced membranous vesicles, creating a dsRNA genomic replication form. This dsRNA is then used as template to synthesize positive stranded RNA genomes. ss(+)RNA genomes are either translated, replicated or encapsidated. This is Genome polyprotein from Homo sapiens (Human).